We begin with the raw amino-acid sequence, 302 residues long: Pentatricopeptide repeat-containing protein At4g38150 (302 aa).

Positions serine 26–aspartate 40 are enriched in polar residues. Disordered stretches follow at residues serine 26–serine 82 and valine 94–glutamate 116. Positions leucine 54–proline 67 are enriched in basic and acidic residues. PPR repeat units follow at residues leucine 130 to proline 164, glutamate 165 to proline 199, asparagine 200 to proline 234, and asparagine 235 to valine 269.

This sequence belongs to the PPR family. P subfamily.

This is Pentatricopeptide repeat-containing protein At4g38150 from Arabidopsis thaliana (Mouse-ear cress).